A 432-amino-acid chain; its full sequence is 3-phosphoshikimate 1-carboxyvinyltransferase (432 aa).

3-phosphoshikimate-binding residues include Lys23, Ser24, and Arg28. Residue Lys23 coordinates phosphoenolpyruvate. Phosphoenolpyruvate-binding residues include Gly99 and Arg127. Residues Ser172, Ser173, Gln174, Ser200, Asp317, Asn341, and Lys345 each contribute to the 3-phosphoshikimate site. Gln174 is a phosphoenolpyruvate binding site. The Proton acceptor role is filled by Asp317. Residues Arg349, Arg391, and Lys416 each contribute to the phosphoenolpyruvate site.

This sequence belongs to the EPSP synthase family. In terms of assembly, monomer.

It localises to the cytoplasm. The enzyme catalyses 3-phosphoshikimate + phosphoenolpyruvate = 5-O-(1-carboxyvinyl)-3-phosphoshikimate + phosphate. It functions in the pathway metabolic intermediate biosynthesis; chorismate biosynthesis; chorismate from D-erythrose 4-phosphate and phosphoenolpyruvate: step 6/7. Its function is as follows. Catalyzes the transfer of the enolpyruvyl moiety of phosphoenolpyruvate (PEP) to the 5-hydroxyl of shikimate-3-phosphate (S3P) to produce enolpyruvyl shikimate-3-phosphate and inorganic phosphate. The chain is 3-phosphoshikimate 1-carboxyvinyltransferase from Blochmanniella pennsylvanica (strain BPEN).